We begin with the raw amino-acid sequence, 478 residues long: Cytochrome c-552 (478 aa).

The signal sequence occupies residues 1-26 (MTRIKINARRIFSLLIPFFFFTSVHA). His-94 contributes to the heme c binding site. 3 residues coordinate heme: Cys-122, Cys-125, and Lys-126. Positions 160, 163, 164, 209, 212, and 213 each coordinate heme c. Residues Glu-215, Tyr-216, Lys-261, and Gln-263 each contribute to the Ca(2+) site. Tyr-216 contacts substrate. His-264 lines the substrate pocket. 9 residues coordinate heme c: His-275, Cys-282, Cys-285, His-286, His-301, Cys-314, Cys-317, His-318, and His-393.

It belongs to the cytochrome c-552 family. The cofactor is Ca(2+). Heme c is required as a cofactor.

The protein resides in the periplasm. The enzyme catalyses 6 Fe(III)-[cytochrome c] + NH4(+) + 2 H2O = 6 Fe(II)-[cytochrome c] + nitrite + 8 H(+). It participates in nitrogen metabolism; nitrate reduction (assimilation). In terms of biological role, catalyzes the reduction of nitrite to ammonia, consuming six electrons in the process. The chain is Cytochrome c-552 from Escherichia coli O6:H1 (strain CFT073 / ATCC 700928 / UPEC).